A 464-amino-acid chain; its full sequence is Forkhead box protein N3 (464 aa).

2 disordered regions span residues 1-53 (MGPI…EKGG) and 85-108 (PVQD…DAKQ). Over residues 14–30 (TGISVSSQCYRSSTLSN) the composition is skewed to polar residues. Residues 113 to 209 (KPPYSFSCLI…QALKKTPYHP (97 aa)) constitute a DNA-binding region (fork-head). 2 disordered regions span residues 294–337 (MESE…SSSA) and 381–428 (LVES…MKEA). Residues 316–336 (SSAKSANKRSSSPSDSISSSS) are compositionally biased toward low complexity. The span at 389–401 (QHKKKQHLLKLRR) shows a compositional bias: basic residues.

It localises to the nucleus. In terms of biological role, acts as a transcriptional repressor. May be involved in DNA damage-inducible cell cycle arrests (checkpoints). This is Forkhead box protein N3 from Xenopus tropicalis (Western clawed frog).